We begin with the raw amino-acid sequence, 190 residues long: Endoribonuclease YbeY (190 aa).

Zn(2+) contacts are provided by histidine 147, histidine 151, and histidine 157.

Belongs to the endoribonuclease YbeY family. Zn(2+) is required as a cofactor.

The protein localises to the cytoplasm. Single strand-specific metallo-endoribonuclease involved in late-stage 70S ribosome quality control and in maturation of the 3' terminus of the 16S rRNA. The protein is Endoribonuclease YbeY of Nitrobacter winogradskyi (strain ATCC 25391 / DSM 10237 / CIP 104748 / NCIMB 11846 / Nb-255).